We begin with the raw amino-acid sequence, 981 residues long: Serine/threonine-protein kinase D1044.8 (981 aa).

Positions 453-725 (YELLDQLGAG…MCGVRLLEYL (273 aa)) constitute a Protein kinase domain. ATP-binding positions include 459-467 (LGAGAFGCV) and lysine 488. The Proton acceptor role is filled by aspartate 591. Positions 735-746 (TSDMTASQSSYN) are enriched in polar residues. Disordered regions lie at residues 735-802 (TSDM…PSSI) and 823-847 (IPSRRRVQTCSTEHPARSSSSTELK). Residues 752–762 (SPSSLNSSTSS) are compositionally biased toward low complexity. Over residues 830–847 (QTCSTEHPARSSSSTELK) the composition is skewed to polar residues.

The protein belongs to the protein kinase superfamily. NEK Ser/Thr protein kinase family. NIMA subfamily. The cofactor is Mg(2+).

It carries out the reaction L-seryl-[protein] + ATP = O-phospho-L-seryl-[protein] + ADP + H(+). The catalysed reaction is L-threonyl-[protein] + ATP = O-phospho-L-threonyl-[protein] + ADP + H(+). The polypeptide is Serine/threonine-protein kinase D1044.8 (nekl-4) (Caenorhabditis elegans).